A 351-amino-acid polypeptide reads, in one-letter code: Dihydroorotate dehydrogenase (quinone) (351 aa).

Residues 61 to 65 (AGLDK) and Thr-85 contribute to the FMN site. Lys-65 contacts substrate. 110 to 114 (NRMGF) contacts substrate. Residues Asn-139 and Asn-172 each contribute to the FMN site. Asn-172 contributes to the substrate binding site. The Nucleophile role is filled by Ser-175. Asn-177 lines the substrate pocket. 2 residues coordinate FMN: Lys-217 and Thr-245. Residue 246–247 (NT) participates in substrate binding. FMN is bound by residues Gly-268, Gly-297, and 318–319 (YS).

The protein belongs to the dihydroorotate dehydrogenase family. Type 2 subfamily. In terms of assembly, monomer. FMN is required as a cofactor.

The protein localises to the cell membrane. It catalyses the reaction (S)-dihydroorotate + a quinone = orotate + a quinol. The protein operates within pyrimidine metabolism; UMP biosynthesis via de novo pathway; orotate from (S)-dihydroorotate (quinone route): step 1/1. Catalyzes the conversion of dihydroorotate to orotate with quinone as electron acceptor. This chain is Dihydroorotate dehydrogenase (quinone), found in Stenotrophomonas maltophilia (strain R551-3).